The following is a 287-amino-acid chain: Cbb3-type cytochrome c oxidase subunit FixP (287 aa).

At 1-33 (MSQKHIDELSGVETTGHEWDGIQELNNPMPRWW) the chain is on the cytoplasmic side. Residues 34 to 54 (IWTFYVTILWAIGYAIAYPAI) traverse the membrane as a helical segment. Over 55–287 (PMITSATNGY…IFVHALGGGT (233 aa)) the chain is Periplasmic. Cytochrome c domains lie at 108 to 196 (FAIA…WGLT) and 203 to 284 (GLAA…HALG). C121, C124, H125, M173, C216, C219, H220, and M261 together coordinate heme c.

This sequence belongs to the CcoP / FixP family. Component of the cbb3-type cytochrome c oxidase at least composed of FixN, FixO, FixQ and FixP. Heme c serves as cofactor.

It is found in the cell inner membrane. It functions in the pathway energy metabolism; oxidative phosphorylation. In terms of biological role, C-type cytochrome. Part of the cbb3-type cytochrome c oxidase complex. FixP subunit is required for transferring electrons from donor cytochrome c via its heme groups to FixO subunit. From there, electrons are shuttled to the catalytic binuclear center of FixN subunit where oxygen reduction takes place. The complex also functions as a proton pump. The polypeptide is Cbb3-type cytochrome c oxidase subunit FixP (Rhizobium etli (strain ATCC 51251 / DSM 11541 / JCM 21823 / NBRC 15573 / CFN 42)).